Reading from the N-terminus, the 127-residue chain is Large ribosomal subunit protein bL20 (127 aa).

This sequence belongs to the bacterial ribosomal protein bL20 family.

In terms of biological role, binds directly to 23S ribosomal RNA and is necessary for the in vitro assembly process of the 50S ribosomal subunit. It is not involved in the protein synthesizing functions of that subunit. The sequence is that of Large ribosomal subunit protein bL20 from Corynebacterium urealyticum (strain ATCC 43042 / DSM 7109).